Reading from the N-terminus, the 135-residue chain is Basic phospholipase A2 KBf-VA (135 aa).

Intrachain disulfides connect Cys28-Cys87, Cys42-Cys134, Cys44-Cys60, Cys59-Cys115, Cys66-Cys108, Cys76-Cys101, and Cys94-Cys106. Tyr43, Gly45, and Gly47 together coordinate Ca(2+). His63 is an active-site residue. Asp64 provides a ligand contact to Ca(2+). The active site involves Asp109.

Belongs to the phospholipase A2 family. Group I subfamily. D49 sub-subfamily. Ca(2+) is required as a cofactor. As to expression, expressed by the venom gland.

The protein resides in the secreted. It carries out the reaction a 1,2-diacyl-sn-glycero-3-phosphocholine + H2O = a 1-acyl-sn-glycero-3-phosphocholine + a fatty acid + H(+). Its function is as follows. Snake venom phospholipase A2 (PLA2) that inhibits neuromuscular transmission by blocking acetylcholine release from the nerve termini. PLA2 catalyzes the calcium-dependent hydrolysis of the 2-acyl groups in 3-sn-phosphoglycerides. This chain is Basic phospholipase A2 KBf-VA, found in Bungarus fasciatus (Banded krait).